The following is a 277-amino-acid chain: Phosphate import ATP-binding protein PstB 2 (277 aa).

The region spanning 31–272 is the ABC transporter domain; it reads IEVPGLSLFY…PAKKQTEDYI (242 aa). 63–70 is a binding site for ATP; that stretch reads GPSGCGKS.

It belongs to the ABC transporter superfamily. Phosphate importer (TC 3.A.1.7) family. As to quaternary structure, the complex is composed of two ATP-binding proteins (PstB), two transmembrane proteins (PstC and PstA) and a solute-binding protein (PstS).

Its subcellular location is the cell inner membrane. It catalyses the reaction phosphate(out) + ATP + H2O = ADP + 2 phosphate(in) + H(+). In terms of biological role, part of the ABC transporter complex PstSACB involved in phosphate import. Responsible for energy coupling to the transport system. In Pseudomonas syringae pv. tomato (strain ATCC BAA-871 / DC3000), this protein is Phosphate import ATP-binding protein PstB 2.